A 153-amino-acid polypeptide reads, in one-letter code: Large ribosomal subunit protein uL15 (153 aa).

Residues 21–41 form a disordered region; that stretch reads RGIGSGKGKTGGRGIKGQKSR. A compositionally biased stretch (gly residues) spans 23 to 35; that stretch reads IGSGKGKTGGRGI.

The protein belongs to the universal ribosomal protein uL15 family. In terms of assembly, part of the 50S ribosomal subunit.

Functionally, binds to the 23S rRNA. The chain is Large ribosomal subunit protein uL15 from Rickettsia rickettsii (strain Iowa).